The chain runs to 500 residues: L-arabinose isomerase (500 aa).

4 residues coordinate Mn(2+): Glu306, Glu331, His348, and His447.

Belongs to the arabinose isomerase family. Requires Mn(2+) as cofactor.

It carries out the reaction beta-L-arabinopyranose = L-ribulose. It participates in carbohydrate degradation; L-arabinose degradation via L-ribulose; D-xylulose 5-phosphate from L-arabinose (bacterial route): step 1/3. Catalyzes the conversion of L-arabinose to L-ribulose. In Anoxybacillus flavithermus (strain DSM 21510 / WK1), this protein is L-arabinose isomerase.